The sequence spans 658 residues: NADH-ubiquinone oxidoreductase chain 5 (658 aa).

The next 17 helical transmembrane spans lie at Thr-4–Ile-23, Ile-30–Ile-52, Leu-81–Tyr-103, Arg-112–Thr-129, Tyr-133–Phe-155, Leu-168–Gly-190, Leu-200–Ala-222, Val-243–Arg-262, Thr-272–Phe-294, Val-301–Leu-319, Leu-329–Ala-351, Pro-364–Met-386, Ile-409–Leu-431, Leu-452–Leu-471, Val-505–Tyr-527, Leu-607–Thr-629, and Leu-639–Leu-656.

It belongs to the complex I subunit 5 family.

The protein resides in the mitochondrion inner membrane. The catalysed reaction is a ubiquinone + NADH + 5 H(+)(in) = a ubiquinol + NAD(+) + 4 H(+)(out). In terms of biological role, core subunit of the mitochondrial membrane respiratory chain NADH dehydrogenase (Complex I) that is believed to belong to the minimal assembly required for catalysis. Complex I functions in the transfer of electrons from NADH to the respiratory chain. The immediate electron acceptor for the enzyme is believed to be ubiquinone. The protein is NADH-ubiquinone oxidoreductase chain 5 (nad5) of Talaromyces marneffei (Penicillium marneffei).